We begin with the raw amino-acid sequence, 1555 residues long: Regulating synaptic membrane exocytosis protein 2 (1555 aa).

Residues 1–35 (MSAPLGPRGRPAPTPAASQPPPQPEMPDLSHLTEE) form a disordered region. The span at 10–25 (RPAPTPAASQPPPQPE) shows a compositional bias: pro residues. The region spanning 26–154 (MPDLSHLTEE…TKSGAWFYNS (129 aa)) is the RabBD domain. An FYVE-type zinc finger spans residues 86-142 (KGDAPTCGICHKTKFADGCGHNCSYCQTKFCARCGGRVSLRSNKVMWVCNLCRKQQE). Residues cysteine 92, cysteine 95, cysteine 108, cysteine 111, cysteine 116, cysteine 119, cysteine 134, and cysteine 137 each contribute to the Zn(2+) site. A compositionally biased stretch (polar residues) spans 154 to 163 (SGSNTPQQPD). The tract at residues 154 to 530 (SGSNTPQQPD…STPEYTSCDD (377 aa)) is disordered. Over residues 170–185 (LRSEEAPQEKKAKLHE) the composition is skewed to basic and acidic residues. Positions 259-268 (YVPSDSTMPR) are enriched in polar residues. Composition is skewed to basic and acidic residues over residues 287–298 (EPDHLNYRDSNR), 317–335 (RDEYERQRREEEYQARYRS), 351–370 (EQMRIHAEVSRARHERRHSD), and 379–403 (EDSRISLLRMDRPSRQRSVSERRAA). Serine 369 is modified (phosphoserine). Polar residues predominate over residues 418–432 (AQGQSSYPQRTTNHS). Residues 444-461 (DRPELRRADSLRKQHHLD) show a composition bias toward basic and acidic residues. Positions 479–490 (RNDSLSSDQSES) are enriched in polar residues. Over residues 497–506 (RPHKSKKGGK) the composition is skewed to basic residues. Positions 590–676 (DGSVPRDSGA…EPQVELVVSR (87 aa)) constitute a PDZ domain. At threonine 611 the chain carries Phosphothreonine. The tract at residues 682–716 (PRIPDSTHAQLESSSSSFESQKMDRPSISVTSPMS) is disordered. A phosphoserine mark is found at serine 713 and serine 716. One can recognise a C2 1 domain in the interval 743–866 (FVPRVQIKLW…ALLDDEPHWY (124 aa)). Disordered regions lie at residues 877–913 (PLPHPSPYMPRRQLHGESPTRRLQRSKRISDSEVSDY), 935–1145 (STLS…KRNS), 1180–1207 (YRSGWDPHRGADTVSTKSSDSDVSDVSA), 1268–1288 (LEKNDGSQSDTAVGALGTSGK), and 1307–1332 (KSRSASQLSQTEGGGKKLRSTVQRST). Positions 935–953 (STLSVPEQVMSSNHCSPSG) are enriched in polar residues. 2 stretches are compositionally biased toward basic and acidic residues: residues 996 to 1014 (RMDRHRVMDDHYSSERDSH) and 1025 to 1071 (QTSE…ERAD). Low complexity predominate over residues 1092 to 1114 (ALSRSHPRTGSVQTSPSSTPVTG). Serine 1106 carries the post-translational modification Phosphoserine. Basic and acidic residues-rich tracts occupy residues 1128-1141 (TLERMITEDMDSTR) and 1180-1190 (YRSGWDPHRGA). A phosphoserine mark is found at serine 1200 and serine 1276. One can recognise a C2 2 domain in the interval 1401–1519 (AMGDIQVGMM…ELSNMVIGWF (119 aa)). A phosphoserine mark is found at serine 1540 and serine 1543.

Heterodimer with PCLO. Part of a ternary complex involving PCLO and EPAC2. Interacts with RAB3C, RAB3D and RAB26. Binds RAB3A and RAB3B that have been activated by GTP-binding. Interacts with TSPOAP1 and RIMBP2. Interacts with PPFIA3 and PPFIA4. Interacts via its zinc finger with the first C2 domain of UNC13A. Forms a complex consisting of UNC13A, RIMS2 and RAB3A. Highly expressed in hippocampus, brain cortex, cerebellum and olfactory bulb. Detected at intermediate levels in midbrain, hindbrain and spinal cord, and at low levels in testis.

It is found in the cell membrane. The protein resides in the synapse. Its subcellular location is the presynaptic cell membrane. In terms of biological role, rab effector involved in exocytosis. May act as scaffold protein. Plays a role in dendrite formation by melanocytes. In Rattus norvegicus (Rat), this protein is Regulating synaptic membrane exocytosis protein 2 (Rims2).